A 619-amino-acid chain; its full sequence is MLRIGSRCVRSVPKSSLRVSSTKIGKLFVRSVSDKPEEVFTKLSDENDPQRDAFFKYSWGTWLKNDKQEKEKRITKFSLEGLNSVIDDLYKQSIENAKRLSKSSIPPPAYLPNLTVSLPHNVKIENIGTVNPNEKIRIVSMASIHEGKHHRIYKIDTNAEKSFVLRIPYALDDENTLAYRLKSEVATMDFADLKLGLKVPKVYSFGVNALNPVRQPFILEEYIEGTLLMRSWTPLENDAEDGKSHKDKLNAVINPISKFQAKLAEVKFNAFGSLYFAKDYKTSEESAYEGETNEELKDRWRIGPSVERCLWRKKSTLNFDDRKQYLGPWDISSPLDIVKCTGLLEAENARARLGLVQAHASPEVVAEDILKDQIKTFDNLAKVAPDLINTKTTSIPKMENLLKPRLHHPDLDPMNVILKEDDDVPYLLDFEGSSIKPYILQNTPQFVAYDGPKIYDLEKDIEGYKDMEESEKAKLEFMYKRTRNQFLWEFALNENLPELISSVAPPIKVLRNPYVAAIERKSDEEYLLIEEALLQLAEVWPIFANNKLVNAAEYPLKYSEEEVKKHADALNAYHEKLISQPFAATQGWMPQDMFDNLVQGGILVKNEKGDYVISRTEDA.

A mitochondrion-targeting transit peptide spans 1–31 (MLRIGSRCVRSVPKSSLRVSSTKIGKLFVRS).

This sequence belongs to the AIM9 family.

Its subcellular location is the mitochondrion. This is Altered inheritance of mitochondria protein 9, mitochondrial (AIM9) from Kluyveromyces lactis (strain ATCC 8585 / CBS 2359 / DSM 70799 / NBRC 1267 / NRRL Y-1140 / WM37) (Yeast).